The following is a 39-amino-acid chain: Photosystem II reaction center protein J (39 aa).

A helical membrane pass occupies residues Ile7–Phe27.

Belongs to the PsbJ family. In terms of assembly, PSII is composed of 1 copy each of membrane proteins PsbA, PsbB, PsbC, PsbD, PsbE, PsbF, PsbH, PsbI, PsbJ, PsbK, PsbL, PsbM, PsbT, PsbX, PsbY, PsbZ, Psb30/Ycf12, peripheral proteins PsbO, CyanoQ (PsbQ), PsbU, PsbV and a large number of cofactors. It forms dimeric complexes.

The protein resides in the cellular thylakoid membrane. This protein is a component of the reaction center of photosystem II. In terms of biological role, one of the components of the core complex of photosystem II (PSII). PSII is a light-driven water:plastoquinone oxidoreductase that uses light energy to abstract electrons from H(2)O, generating O(2) and a proton gradient subsequently used for ATP formation. It consists of a core antenna complex that captures photons, and an electron transfer chain that converts photonic excitation into a charge separation. This is Photosystem II reaction center protein J from Picosynechococcus sp. (strain ATCC 27264 / PCC 7002 / PR-6) (Agmenellum quadruplicatum).